The sequence spans 276 residues: NH(3)-dependent NAD(+) synthetase (276 aa).

43–50 (GISGGVDS) contacts ATP. D49 is a binding site for Mg(2+). A deamido-NAD(+)-binding site is contributed by R146. T166 is a binding site for ATP. E171 lines the Mg(2+) pocket. The deamido-NAD(+) site is built by K179 and D186. Positions 195 and 217 each coordinate ATP. Residue 266–267 (HK) participates in deamido-NAD(+) binding.

This sequence belongs to the NAD synthetase family. As to quaternary structure, homodimer.

The enzyme catalyses deamido-NAD(+) + NH4(+) + ATP = AMP + diphosphate + NAD(+) + H(+). It functions in the pathway cofactor biosynthesis; NAD(+) biosynthesis; NAD(+) from deamido-NAD(+) (ammonia route): step 1/1. Its function is as follows. Catalyzes the ATP-dependent amidation of deamido-NAD to form NAD. Uses ammonia as a nitrogen source. In Shewanella halifaxensis (strain HAW-EB4), this protein is NH(3)-dependent NAD(+) synthetase.